A 270-amino-acid chain; its full sequence is (+)-cis,cis-nepetalactol synthase NEPS3 (270 aa).

NAD(+)-binding positions include 21 to 27 (GGASGIG), 46 to 48 (DIQ), 70 to 71 (DV), Asn97, 165 to 169 (YVMSK), and 198 to 202 (VATPL).

It belongs to the short-chain dehydrogenases/reductases (SDR) family. As to quaternary structure, forms homotetramers.

It carries out the reaction (S)-8-oxocitronellyl enol = cis-cis-nepetalactol. Functionally, functions as a non-oxidoreductive cyclase to promote the formation of cis-cis-nepetalactol. Cis-cis-nepetalactol is then oxidized by NEPS1 into cis-cis-nepetalactone, which belongs to a family of metabolites that are both insect-repellent and have euphoric effect in cats. Binds NAD(+) as classical short-chain dehydrogenase/reductase (SDR), but does not utilize it for its redox-neutral cyclase activity. The polypeptide is (+)-cis,cis-nepetalactol synthase NEPS3 (Nepeta racemosa (Catmint)).